Consider the following 347-residue polypeptide: Ceramide very long chain fatty acid hydroxylase scs7 (347 aa).

Over 1-156 (MASVTSEKCV…GNFLEPLTKT (156 aa)) the chain is Cytoplasmic. A helical transmembrane segment spans residues 157 to 177 (PWYMIPLIWVPCVTYGFLYAC). A topological domain (lumenal) is located at residue T178. A helical transmembrane segment spans residues 179–199 (GIPFSVAITFFIIGLFTWTLV). The Cytoplasmic segment spans residues 200–238 (EYTMHRFLFHLDEYTPDHPIFLTMHFAFHGCHHFLPADK). Zn(2+) is bound by residues H204, H209, H228, H231, and H232. A helical transmembrane segment spans residues 239-259 (YRLVMPPALFLIFATPWYHFI). Residue Q260 is a topological domain, lumenal. Residues 261–281 (LVLPHYIGVAGFSGAILGYVF) form a helical membrane-spanning segment. Topologically, residues 282–347 (YDLTHYFLHH…EQGKISTKAK (66 aa)) are cytoplasmic. Zn(2+) is bound by residues H286, H290, H306, H309, and H310.

This sequence belongs to the sterol desaturase family. SCS7 subfamily. The cofactor is Zn(2+).

It localises to the endoplasmic reticulum membrane. The protein operates within sphingolipid metabolism. Ceramide hydroxylase involved in the hydroxylation of sphingolipid-associated very long chain fatty acids. Postulated to hydroxylate the very long chain fatty acid of dihydroceramides and phytoceramides at C-2. This Schizosaccharomyces pombe (strain 972 / ATCC 24843) (Fission yeast) protein is Ceramide very long chain fatty acid hydroxylase scs7.